A 168-amino-acid chain; its full sequence is Photosystem I assembly protein Ycf3 (168 aa).

TPR repeat units follow at residues 35–68 (AFTYYRDGMSAQSEGNYAEALQNYYEATRPEIDP), 72–105 (SYILYNIGLIHTSNGEHTKALEYYFRALERNPFL), and 120–153 (GEQAILQGDSEIAEAWSDQAAEYWKQAIALTPGN).

This sequence belongs to the Ycf3 family.

It localises to the plastid. It is found in the chloroplast thylakoid membrane. Essential for the assembly of the photosystem I (PSI) complex. May act as a chaperone-like factor to guide the assembly of the PSI subunits. The protein is Photosystem I assembly protein Ycf3 of Lemna minor (Common duckweed).